The primary structure comprises 614 residues: MASLSFTQFLSFPRCNADVPCLLQSHGFVKFRGERWNGKQSFSMAAGRRKLSESAPLEEEGNDGNGAVVGKKPSKSVKRTTKKKVVVKDEPLEEISEFLVDNDDVLDKESIVSALKPKKTRTRKKAAAASSDVEEVKTEKKVRRKRTVKKDKDVEDDLATIMDAEVSDVEEALAVESTDTESEEEEIDLSKHEGEDISHTYGWPPLVCCFGSAQHAFVPSGRPANRLLDYELHERMRDAKWAPEKYIRAPGGCAGGVAIALASLGGKVAFMGKLGADDYGQAMLYYLNVCKVQTRSVKIDGKRVTACSTMKISKRGRLKSTCIKPCAEDSLSKSEINVDVLKEAKMFYFSTHSLLDKKMMSTTIQAIKISKQLGNVIFYDLNLPLPLWHSSEETKSFIQEVWNLADVIEITKQELEFLCGIEPTEEFDTENNDISKFVHYPPETVEQLWHENLKVLFVTNGTSKIHYYTKEHNGAVSGMEDVPITPFTRDMSASGDGIVAGLIRMLTVQPDLMNNKGYLERTARYAIECGIIDQWLLAQTRGYPPKDDMEEEEDDEEEDEVESDPNGIRSITEKEYRTSKPYDEPDGPYVMKPVEEREYKKLELVGSMFEDGSL.

The N-terminal 44 residues, 1-44 (MASLSFTQFLSFPRCNADVPCLLQSHGFVKFRGERWNGKQSFSM), are a transit peptide targeting the chloroplast. Disordered regions lie at residues 47–75 (GRRK…KPSK) and 542–592 (GYPP…YVMK). A compositionally biased stretch (acidic residues) spans 548 to 563 (DMEEEEDDEEEDEVES). Basic and acidic residues predominate over residues 571-583 (ITEKEYRTSKPYD).

This sequence belongs to the carbohydrate kinase PfkB family. Interacts with CITRX/TRXz. Binds to FLN1 and PTAC5. Associates with the plastid-encoded RNA polymerase (PEP) complex.

The protein resides in the plastid. It is found in the chloroplast. Functionally, required for proper chloroplast development, most likely through regulating plastid-encoded polymerase (PEP) dependent chloroplast transcription. Acts as a component of the transcriptionally active plastid chromosome that is required for plastid gene expression. In Arabidopsis thaliana (Mouse-ear cress), this protein is Fructokinase-like 2, chloroplastic.